A 202-amino-acid polypeptide reads, in one-letter code: PITH domain-containing protein 1 (202 aa).

Positions 11-184 (SHGVDDGIEY…IVNTVYESKP (174 aa)) constitute a PITH domain.

This sequence belongs to the PITHD1 family.

In Dictyostelium discoideum (Social amoeba), this protein is PITH domain-containing protein 1.